The sequence spans 265 residues: GTP cyclohydrolase FolE2 (265 aa).

Belongs to the GTP cyclohydrolase IV family.

The enzyme catalyses GTP + H2O = 7,8-dihydroneopterin 3'-triphosphate + formate + H(+). It functions in the pathway cofactor biosynthesis; 7,8-dihydroneopterin triphosphate biosynthesis; 7,8-dihydroneopterin triphosphate from GTP: step 1/1. Functionally, converts GTP to 7,8-dihydroneopterin triphosphate. This is GTP cyclohydrolase FolE2 from Bordetella avium (strain 197N).